A 131-amino-acid chain; its full sequence is Transcriptional activatory protein CaiF (131 aa).

Potential transcriptional activator of carnitine metabolism. This is Transcriptional activatory protein CaiF (caiF) from Escherichia coli (strain K12).